The primary structure comprises 303 residues: Monoglyceride lipase (303 aa).

T10 carries the phosphothreonine modification. Y58 is modified (3'-nitrotyrosine). S122 functions as the Nucleophile in the catalytic mechanism. Residues D239 and H269 each act as charge relay system in the active site.

Belongs to the AB hydrolase superfamily. Monoacylglycerol lipase family. Homodimer. Detected in adipose tissue, lung, liver, kidney, brain and heart.

The protein localises to the cytoplasm. It localises to the cytosol. Its subcellular location is the membrane. The catalysed reaction is Hydrolyzes glycerol monoesters of long-chain fatty acids.. The enzyme catalyses a 1-acylglycerol + H2O = glycerol + a fatty acid + H(+). It carries out the reaction a 2-acylglycerol + H2O = glycerol + a fatty acid + H(+). It catalyses the reaction 1-octanoylglycerol + H2O = octanoate + glycerol + H(+). The catalysed reaction is 2-(5Z,8Z,11Z,14Z-eicosatetraenoyl)-glycerol + H2O = glycerol + (5Z,8Z,11Z,14Z)-eicosatetraenoate + H(+). The enzyme catalyses 1-decanoylglycerol + H2O = decanoate + glycerol + H(+). It carries out the reaction 1-dodecanoylglycerol + H2O = dodecanoate + glycerol + H(+). It catalyses the reaction 1-tetradecanoylglycerol + H2O = tetradecanoate + glycerol + H(+). The catalysed reaction is 2-hexadecanoylglycerol + H2O = glycerol + hexadecanoate + H(+). The enzyme catalyses 1-(9Z-octadecenoyl)-glycerol + H2O = glycerol + (9Z)-octadecenoate + H(+). It carries out the reaction 2-(9Z-octadecenoyl)-glycerol + H2O = glycerol + (9Z)-octadecenoate + H(+). It catalyses the reaction 2-(9Z,12Z-octadecadienoyl)-glycerol + H2O = (9Z,12Z)-octadecadienoate + glycerol + H(+). The catalysed reaction is 1-(5Z,8Z,11Z,14Z-eicosatetraenoyl)-glycerol + H2O = glycerol + (5Z,8Z,11Z,14Z)-eicosatetraenoate + H(+). The enzyme catalyses 1-(9Z,12Z-octadecadienoyl)-glycerol + H2O = (9Z,12Z)-octadecadienoate + glycerol + H(+). It carries out the reaction 1-hexadecanoylglycerol + H2O = glycerol + hexadecanoate + H(+). It catalyses the reaction 1-octadecanoylglycerol + H2O = octadecanoate + glycerol + H(+). The catalysed reaction is prostaglandin E2 1-glyceryl ester + H2O = prostaglandin E2 + glycerol + H(+). The enzyme catalyses prostaglandin D2-1-glycerol ester + H2O = prostaglandin D2 + glycerol + H(+). It carries out the reaction 2-glyceryl-15-deoxy-Delta(12,14)-prostaglandin J2 + H2O = 15-deoxy-Delta(12,14)-prostaglandin J2 + glycerol + H(+). It catalyses the reaction prostaglandin F2alpha 1-glyceryl ester + H2O = prostaglandin F2alpha + glycerol + H(+). It participates in glycerolipid metabolism; triacylglycerol degradation. In terms of biological role, converts monoacylglycerides to free fatty acids and glycerol. Hydrolyzes the endocannabinoid 2-arachidonoylglycerol, and thereby contributes to the regulation of endocannabinoid signaling, nociperception and perception of pain. Regulates the levels of fatty acids that serve as signaling molecules and promote cancer cell migration, invasion and tumor growth. The protein is Monoglyceride lipase of Homo sapiens (Human).